The sequence spans 536 residues: Prickle planar cell polarity protein 3-B (536 aa).

The PET domain occupies 66–175 (SGSQRDSLCD…CVRPISGTMS (110 aa)). LIM zinc-binding domains follow at residues 177-241 (TVCQ…ELKR), 242-302 (PRCL…LYAQ), and 305-366 (DSCG…HTKS). Residues 418–536 (PTQAAPARSL…KKKDKSCFLS (119 aa)) are disordered. Residues 438 to 448 (FSRECPNRRSL) show a composition bias toward basic and acidic residues. A compositionally biased stretch (polar residues) spans 450–467 (DLSSHTRTPTRVTFQLPS). Residues 474-487 (SISFSRPSFTSSSS) are compositionally biased toward low complexity.

This sequence belongs to the prickle / espinas / testin family. Interacts with vangl2 via its C-terminus. The vangl2-dependent membrane recruitment of prickle3 is a prerequisite for its polarization. Interacts with wtip. Wtip is involved in the recruitment of prickle3 to the basal body.

Its subcellular location is the cytoplasm. It localises to the cell membrane. It is found in the mitochondrion. Its function is as follows. Involved in the planar cell polarity (PCP) pathway that is essential for the polarization of epithelial cells during morphogenetic processes, including gastrulation and neurulation. PCP is maintained by two molecular modules, the global and the core modules. Proteins of the core module include the proteins Frizzled (Fz), Disheveled (Dsh), Van Gogh (Vang), Prickle (Pk), Flamingo (Fmi, Celsr) and Diego (Dgo). The core module proteins develop subcellular asymmetry, accumulating in two groups on opposite sides of epithelial cells. Distinct proximal (Vang, Pk and Fmi) and distal (Fz, Dsh, Dgo and Fmi) complexes segregate to opposite sides of the cell, where they interact with the opposite complex in the neighboring cell at or near the adherents junctions. Directional information to orient polarization with respect to the tissue axes is provided by the global module which involves Wnt proteins. Involved in the organization of the basal body. Involved in cilia growth and positioning. Required for proper assembly, stability, and function of mitochondrial membrane ATP synthase (mitochondrial complex V). In Xenopus laevis (African clawed frog), this protein is Prickle planar cell polarity protein 3-B (prickle3-b).